Here is a 233-residue protein sequence, read N- to C-terminus: 3-dehydroquinate dehydratase (233 aa).

3-dehydroquinate contacts are provided by residues 39 to 41 and R73; that span reads EIR. Residue H132 is the Proton donor/acceptor of the active site. K159 (schiff-base intermediate with substrate) is an active-site residue. The 3-dehydroquinate site is built by R196 and Q219.

It belongs to the type-I 3-dehydroquinase family. As to quaternary structure, homodimer.

It catalyses the reaction 3-dehydroquinate = 3-dehydroshikimate + H2O. The protein operates within metabolic intermediate biosynthesis; chorismate biosynthesis; chorismate from D-erythrose 4-phosphate and phosphoenolpyruvate: step 3/7. In terms of biological role, involved in the third step of the chorismate pathway, which leads to the biosynthesis of aromatic amino acids. Catalyzes the cis-dehydration of 3-dehydroquinate (DHQ) and introduces the first double bond of the aromatic ring to yield 3-dehydroshikimate. This Methanococcoides burtonii (strain DSM 6242 / NBRC 107633 / OCM 468 / ACE-M) protein is 3-dehydroquinate dehydratase.